Reading from the N-terminus, the 278-residue chain is Thiazole synthase (278 aa).

The Schiff-base intermediate with DXP role is filled by Lys-107. 1-deoxy-D-xylulose 5-phosphate-binding positions include Gly-168, 194–195 (AG), and 216–217 (AS).

This sequence belongs to the ThiG family. Homotetramer. Forms heterodimers with either ThiH or ThiS.

It localises to the cytoplasm. The enzyme catalyses [ThiS sulfur-carrier protein]-C-terminal-Gly-aminoethanethioate + 2-iminoacetate + 1-deoxy-D-xylulose 5-phosphate = [ThiS sulfur-carrier protein]-C-terminal Gly-Gly + 2-[(2R,5Z)-2-carboxy-4-methylthiazol-5(2H)-ylidene]ethyl phosphate + 2 H2O + H(+). The protein operates within cofactor biosynthesis; thiamine diphosphate biosynthesis. In terms of biological role, catalyzes the rearrangement of 1-deoxy-D-xylulose 5-phosphate (DXP) to produce the thiazole phosphate moiety of thiamine. Sulfur is provided by the thiocarboxylate moiety of the carrier protein ThiS. In vitro, sulfur can be provided by H(2)S. This Corynebacterium jeikeium (strain K411) protein is Thiazole synthase.